The primary structure comprises 581 residues: Probable CDP-diacylglycerol--glycerol-3-phosphate 3-phosphatidyltransferase (581 aa).

The disordered stretch occupies residues 27–65 (RSATTTTTTTTKACGNGSSQSPPSTPLLSSKSSTITSNK). Over residues 44–65 (SSQSPPSTPLLSSKSSTITSNK) the composition is skewed to low complexity. 160–167 (ASLYLGTS) provides a ligand contact to ATP. 2 consecutive PLD phosphodiesterase domains span residues 248–274 (TIGV…SKDY) and 487–520 (DKWT…GSRS). Catalysis depends on residues H253, K255, and D260.

The protein belongs to the CDP-alcohol phosphatidyltransferase class-II family.

The catalysed reaction is a CDP-1,2-diacyl-sn-glycerol + sn-glycerol 3-phosphate = a 1,2-diacyl-sn-glycero-3-phospho-(1'-sn-glycero-3'-phosphate) + CMP + H(+). It participates in phospholipid metabolism; phosphatidylglycerol biosynthesis; phosphatidylglycerol from CDP-diacylglycerol: step 1/2. Functionally, functions in the biosynthesis of the anionic phospholipids phosphatidylglycerol and cardiolipin. The chain is Probable CDP-diacylglycerol--glycerol-3-phosphate 3-phosphatidyltransferase (pgs1) from Dictyostelium discoideum (Social amoeba).